The chain runs to 280 residues: Ribosomal RNA small subunit methyltransferase A (280 aa).

Residues N18, L20, G45, E66, D89, and N110 each contribute to the S-adenosyl-L-methionine site.

Belongs to the class I-like SAM-binding methyltransferase superfamily. rRNA adenine N(6)-methyltransferase family. RsmA subfamily.

It is found in the cytoplasm. It catalyses the reaction adenosine(1518)/adenosine(1519) in 16S rRNA + 4 S-adenosyl-L-methionine = N(6)-dimethyladenosine(1518)/N(6)-dimethyladenosine(1519) in 16S rRNA + 4 S-adenosyl-L-homocysteine + 4 H(+). Specifically dimethylates two adjacent adenosines (A1518 and A1519) in the loop of a conserved hairpin near the 3'-end of 16S rRNA in the 30S particle. May play a critical role in biogenesis of 30S subunits. This Cupriavidus necator (strain ATCC 17699 / DSM 428 / KCTC 22496 / NCIMB 10442 / H16 / Stanier 337) (Ralstonia eutropha) protein is Ribosomal RNA small subunit methyltransferase A.